The following is a 205-amino-acid chain: Lymphotoxin-alpha (205 aa).

Positions 1–34 (MTPPGRLYLPRVRGTRLLFLLLGLLLALPPRAKG) are cleaved as a signal peptide. In terms of domain architecture, THD spans 63–205 (PAAHLVGDPS…SSVFFGAFAL (143 aa)). The N-linked (GlcNAc...) asparagine glycan is linked to asparagine 96. A disulfide bond links cysteine 120 and cysteine 156.

Belongs to the tumor necrosis factor family. In terms of assembly, homotrimer, and heterotrimer of either two LTB and one LTA subunits or (less prevalent) two LTA and one LTB subunits. Interacts with TNFRSF14.

It localises to the secreted. It is found in the membrane. Functionally, cytokine that in its homotrimeric form binds to TNFRSF1A/TNFR1, TNFRSF1B/TNFBR and TNFRSF14/HVEM. In its heterotrimeric form with LTB binds to TNFRSF3/LTBR. Lymphotoxin is produced by lymphocytes and is cytotoxic for a wide range of tumor cells in vitro and in vivo. The sequence is that of Lymphotoxin-alpha (LTA) from Marmota monax (Woodchuck).